The following is a 74-amino-acid chain: CLAVATA3/ESR (CLE)-related protein 19 (74 aa).

A signal peptide spans Met1 to Ser24. Residues Asn34 and Asn54 are each glycosylated (N-linked (GlcNAc...) asparagine). Residues Pro65 and Pro68 each carry the hydroxyproline modification. An O-linked (Ara...) hydroxyproline glycan is attached at Pro68.

It belongs to the CLV3/ESR signal peptide family. Post-translationally, the O-glycosylation (arabinosylation) of the hydroxyproline Pro-68 enhances binding affinity of the CLE19p peptide for its receptor. As to expression, mostly expressed in heart-shape embryos, pollen and young flower buds, and, to a lower extent, in inflorescence, leaves and roots.

Its subcellular location is the secreted. The protein localises to the extracellular space. Functionally, extracellular signal peptide that regulates cell fate. Represses root apical meristem maintenance. The chain is CLAVATA3/ESR (CLE)-related protein 19 from Arabidopsis thaliana (Mouse-ear cress).